Consider the following 373-residue polypeptide: 4-hydroxy-3-methylbut-2-en-1-yl diphosphate synthase (flavodoxin) (373 aa).

The [4Fe-4S] cluster site is built by cysteine 270, cysteine 273, cysteine 305, and glutamate 312.

Belongs to the IspG family. [4Fe-4S] cluster is required as a cofactor.

It carries out the reaction (2E)-4-hydroxy-3-methylbut-2-enyl diphosphate + oxidized [flavodoxin] + H2O + 2 H(+) = 2-C-methyl-D-erythritol 2,4-cyclic diphosphate + reduced [flavodoxin]. The protein operates within isoprenoid biosynthesis; isopentenyl diphosphate biosynthesis via DXP pathway; isopentenyl diphosphate from 1-deoxy-D-xylulose 5-phosphate: step 5/6. In terms of biological role, converts 2C-methyl-D-erythritol 2,4-cyclodiphosphate (ME-2,4cPP) into 1-hydroxy-2-methyl-2-(E)-butenyl 4-diphosphate. In Photobacterium profundum (strain SS9), this protein is 4-hydroxy-3-methylbut-2-en-1-yl diphosphate synthase (flavodoxin).